A 426-amino-acid polypeptide reads, in one-letter code: Vitamin D3 receptor (426 aa).

Residues 21 to 96 constitute a DNA-binding region (nuclear receptor); it reads PRICGVCGDR…IGMMKEFILT (76 aa). Zn(2+) contacts are provided by Cys-24, Cys-27, Cys-41, Cys-44, Cys-60, Cys-66, Cys-76, and Cys-79. NR C4-type zinc fingers lie at residues 24–44 and 60–84; these read CGVC…CEGC and CPFN…LKRC. The hinge stretch occupies residues 97–126; that stretch reads DEEVQRKREMILKRKEEEALKDSLRPKLSE. An NR LBD domain is found at 127-422; sequence EQQRIITTLL…LTPLLFEVFG (296 aa). Tyr-143 contacts calcitriol. Residues 147 to 215 are disordered; the sequence is YSDFSQFRPP…NEEDSDDPSV (69 aa). The span at 175–191 shows a compositional bias: low complexity; the sequence is SFSGNSSSSCSDHCTSS. Over residues 192–204 the composition is skewed to polar residues; that stretch reads PDTMEPTSFSNQD. A calcitriol-binding site is contributed by Ser-235. Residues 244 to 262 are interaction with coactivator LXXLL motif; that stretch reads KMIPGFRDLTPEDQIVLLK. 4 residues coordinate calcitriol: Arg-272, Ser-276, His-304, and His-396. Residues 415-423 carry the 9aaTAD motif; it reads PLLFEVFGN.

It belongs to the nuclear hormone receptor family. NR1 subfamily. In terms of assembly, homodimer in the absence of bound vitamin D3. Heterodimer with RXRA after vitamin D3 binding. Interacts with MED1, NCOA1, NCOA2, NCOA3 and NCOA6 coactivators, leading to a strong increase of transcription of target genes. Interacts with the corepressor NCOR1. Interacts with SNW1. Interacts with IRX4, the interaction does not affect its transactivation activity. Interacts with CRY1. Interacts with CRY2 in a ligand-dependent manner. Ubiquitinated by UBR5, leading to its degradation: UBR5 specifically recognizes and binds ligand-bound VDR when it is not associated with coactivators (NCOAs). In presence of NCOAs, the UBR5-degron is not accessible, preventing its ubiquitination and degradation. In terms of tissue distribution, mammary gland, expression increases during lactation. Also found in colon, expression is down-regulated at parturition.

It localises to the nucleus. It is found in the cytoplasm. Its function is as follows. Nuclear receptor for calcitriol, the active form of vitamin D3 which mediates the action of this vitamin on cells. Enters the nucleus upon vitamin D3 binding where it forms heterodimers with the retinoid X receptor/RXR. The VDR-RXR heterodimers bind to specific response elements on DNA and activate the transcription of vitamin D3-responsive target genes. Plays a central role in calcium homeostasis. Also functions as a receptor for the secondary bile acid lithocholic acid (LCA) and its metabolites. This Bos taurus (Bovine) protein is Vitamin D3 receptor (VDR).